The following is a 954-amino-acid chain: Valine--tRNA ligase (954 aa).

Residues 48–58 (PNVTGSLHMGH) carry the 'HIGH' region motif. Positions 560-564 (KMSKS) match the 'KMSKS' region motif. Residue lysine 563 participates in ATP binding. Positions 883–954 (AGFINKEAEL…QTQYQAIENL (72 aa)) form a coiled coil.

This sequence belongs to the class-I aminoacyl-tRNA synthetase family. ValS type 1 subfamily. As to quaternary structure, monomer.

It is found in the cytoplasm. The catalysed reaction is tRNA(Val) + L-valine + ATP = L-valyl-tRNA(Val) + AMP + diphosphate. In terms of biological role, catalyzes the attachment of valine to tRNA(Val). As ValRS can inadvertently accommodate and process structurally similar amino acids such as threonine, to avoid such errors, it has a 'posttransfer' editing activity that hydrolyzes mischarged Thr-tRNA(Val) in a tRNA-dependent manner. The polypeptide is Valine--tRNA ligase (Actinobacillus pleuropneumoniae serotype 5b (strain L20)).